Reading from the N-terminus, the 102-residue chain is Small ribosomal subunit protein uS10 (102 aa).

The protein belongs to the universal ribosomal protein uS10 family. Part of the 30S ribosomal subunit.

Functionally, involved in the binding of tRNA to the ribosomes. The protein is Small ribosomal subunit protein uS10 of Thermoanaerobacter pseudethanolicus (strain ATCC 33223 / 39E) (Clostridium thermohydrosulfuricum).